The chain runs to 652 residues: Protein high chlorophyll fluorescent 107 (652 aa).

2 disordered regions span residues 1-21 (MHFFFVPNSSSSSPSPANTSS) and 78-121 (VFSP…EGKK). The N-terminal 68 residues, 1–68 (MHFFFVPNSS…TFSSKNTYLY (68 aa)), are a transit peptide targeting the chloroplast. Residues 105–121 (PLLENSDKESSEEEGKK) show a composition bias toward basic and acidic residues. TPR repeat units follow at residues 168–201 (LDLSLYKAKVLARNFRYKDAEKILEKCIAYWPED), 202–235 (GRPYVALGKILSKQSKLAEARILYEKGCQSTQGE), 237–270 (SYIWQCWAVLENRLGNVRRARELFDAATVADKKH), 271–304 (VAAWHGWANLEIKQGNISKARNLLAKGLKFCGRN), 305–338 (EYIYQTLALLEAKAGRYEQARYLFKQATICNSRS), 339–372 (CASWLAWAQLEIQQERYPAARKLFEKAVQASPKN), 374–406 (FAWHVWGVFEAGVGNVERGRKLLKIGHALNPRD), 407–440 (PVLLQSLGLLEYKHSSANLARALLRRASELDPRH), 441–474 (QPVWIAWGWMEWKEGNTTTARELYQRALSIDANT), 478–511 (SRCLQAWGVLEQRAGNLSAARRLFRSSLNINSQS), 543–576 (TEVVDDASWVTGFLDIIDPALDTVKRLLNFGQNN), and 598–631 (QQPESSAGREDIETGSGFNLDVFLRSKLSLDPLK). The disordered stretch occupies residues 585 to 610 (LRNMNRTKDSQSNQQPESSAGREDIE).

May form homomultimers. Part of a multi-subunit complex in the range of 60-190 and 600-800 kDa in chloroplast membranes.

It is found in the plastid. Its subcellular location is the chloroplast. The protein localises to the chloroplast membrane. It localises to the chloroplast stroma. Involved, directly or indirectly, in the processing of chloroplast encoded mRNAs. Exhibits sequence-specific RNA binding and RNA remodeling activities, probably leading to the activation of translation of the target gene cluster psbB-psbT-psbH-petB-petD. Blocks 5'-3' and 3'-5' exoribonucleases (e.g. polynucleotide phosphorylase (PNPase), RNase R) in vitro. Necessary for intercistronic RNA processing of the psbH 5' untranslated region or the stabilization of 5' processed psbH RNAs. Also required for the synthesis of psbB. The sequence is that of Protein high chlorophyll fluorescent 107 from Arabidopsis thaliana (Mouse-ear cress).